The primary structure comprises 301 residues: Phosphatidylserine decarboxylase proenzyme (301 aa).

Catalysis depends on charge relay system; for autoendoproteolytic cleavage activity residues Asp-117, His-173, and Ser-260. Ser-260 functions as the Schiff-base intermediate with substrate; via pyruvic acid; for decarboxylase activity in the catalytic mechanism. Ser-260 carries the pyruvic acid (Ser); by autocatalysis modification.

Belongs to the phosphatidylserine decarboxylase family. PSD-B subfamily. Prokaryotic type II sub-subfamily. As to quaternary structure, heterodimer of a large membrane-associated beta subunit and a small pyruvoyl-containing alpha subunit. The cofactor is pyruvate. In terms of processing, is synthesized initially as an inactive proenzyme. Formation of the active enzyme involves a self-maturation process in which the active site pyruvoyl group is generated from an internal serine residue via an autocatalytic post-translational modification. Two non-identical subunits are generated from the proenzyme in this reaction, and the pyruvate is formed at the N-terminus of the alpha chain, which is derived from the carboxyl end of the proenzyme. The autoendoproteolytic cleavage occurs by a canonical serine protease mechanism, in which the side chain hydroxyl group of the serine supplies its oxygen atom to form the C-terminus of the beta chain, while the remainder of the serine residue undergoes an oxidative deamination to produce ammonia and the pyruvoyl prosthetic group on the alpha chain. During this reaction, the Ser that is part of the protease active site of the proenzyme becomes the pyruvoyl prosthetic group, which constitutes an essential element of the active site of the mature decarboxylase.

The protein localises to the cell membrane. It carries out the reaction a 1,2-diacyl-sn-glycero-3-phospho-L-serine + H(+) = a 1,2-diacyl-sn-glycero-3-phosphoethanolamine + CO2. It functions in the pathway phospholipid metabolism; phosphatidylethanolamine biosynthesis; phosphatidylethanolamine from CDP-diacylglycerol: step 2/2. Functionally, catalyzes the formation of phosphatidylethanolamine (PtdEtn) from phosphatidylserine (PtdSer). The sequence is that of Phosphatidylserine decarboxylase proenzyme from Chlamydia trachomatis serovar L2b (strain UCH-1/proctitis).